Here is a 162-residue protein sequence, read N- to C-terminus: Protein NrdI (162 aa).

Belongs to the NrdI family.

Probably involved in ribonucleotide reductase function. The protein is Protein NrdI of Streptococcus pyogenes serotype M1.